Consider the following 77-residue polypeptide: Exodeoxyribonuclease 7 small subunit (77 aa).

Belongs to the XseB family. As to quaternary structure, heterooligomer composed of large and small subunits.

It localises to the cytoplasm. It carries out the reaction Exonucleolytic cleavage in either 5'- to 3'- or 3'- to 5'-direction to yield nucleoside 5'-phosphates.. Functionally, bidirectionally degrades single-stranded DNA into large acid-insoluble oligonucleotides, which are then degraded further into small acid-soluble oligonucleotides. This is Exodeoxyribonuclease 7 small subunit from Chromobacterium violaceum (strain ATCC 12472 / DSM 30191 / JCM 1249 / CCUG 213 / NBRC 12614 / NCIMB 9131 / NCTC 9757 / MK).